The following is a 117-amino-acid chain: Immunoglobulin heavy variable 1-2 (117 aa).

The signal sequence occupies residues 1–19 (MDWTWRILFLVAAATGAHS). A Pyrrolidone carboxylic acid modification is found at Q20. The framework-1 stretch occupies residues 20-44 (QVQLVQSGAEVKKPGASVKVSCKAS). The Ig-like domain occupies 20–117 (QVQLVQSGAE…DDTAVYYCAR (98 aa)). C41 and C115 are disulfide-bonded. The tract at residues 45 to 52 (GYTFTGYY) is complementarity-determining-1. Residues 53 to 69 (MHWVRQAPGQGLEWMGW) form a framework-2 region. Positions 70 to 77 (INPNSGGT) are complementarity-determining-2. The interval 78 to 115 (NYAQKFQGWVTMTRDTSISTAYMELSRLRSDDTAVYYC) is framework-3. The segment at 116–117 (AR) is complementarity-determining-3.

In terms of assembly, immunoglobulins are composed of two identical heavy chains and two identical light chains; disulfide-linked.

The protein localises to the secreted. It is found in the cell membrane. Functionally, v region of the variable domain of immunoglobulin heavy chains that participates in the antigen recognition. Immunoglobulins, also known as antibodies, are membrane-bound or secreted glycoproteins produced by B lymphocytes. In the recognition phase of humoral immunity, the membrane-bound immunoglobulins serve as receptors which, upon binding of a specific antigen, trigger the clonal expansion and differentiation of B lymphocytes into immunoglobulins-secreting plasma cells. Secreted immunoglobulins mediate the effector phase of humoral immunity, which results in the elimination of bound antigens. The antigen binding site is formed by the variable domain of one heavy chain, together with that of its associated light chain. Thus, each immunoglobulin has two antigen binding sites with remarkable affinity for a particular antigen. The variable domains are assembled by a process called V-(D)-J rearrangement and can then be subjected to somatic hypermutations which, after exposure to antigen and selection, allow affinity maturation for a particular antigen. The protein is Immunoglobulin heavy variable 1-2 of Homo sapiens (Human).